The following is a 223-amino-acid chain: Ribosomal RNA small subunit methyltransferase G (223 aa).

3 residues coordinate S-adenosyl-L-methionine: G85, F90, and R154.

The protein belongs to the methyltransferase superfamily. RNA methyltransferase RsmG family.

Its subcellular location is the cytoplasm. It carries out the reaction guanosine(527) in 16S rRNA + S-adenosyl-L-methionine = N(7)-methylguanosine(527) in 16S rRNA + S-adenosyl-L-homocysteine. Its function is as follows. Specifically methylates the N7 position of guanine in position 527 of 16S rRNA. In Rhodopseudomonas palustris (strain TIE-1), this protein is Ribosomal RNA small subunit methyltransferase G.